A 334-amino-acid polypeptide reads, in one-letter code: Flotillin-like protein FloA (334 aa).

Residues 3 to 23 traverse the membrane as a helical segment; sequence LYLIFLIVVGVVGLVLVGLFL.

The protein belongs to the flotillin-like FloA family. Homooligomerizes.

The protein resides in the cell membrane. Its subcellular location is the membrane raft. Its function is as follows. Found in functional membrane microdomains (FMM) that may be equivalent to eukaryotic membrane rafts. FMMs are highly dynamic and increase in number as cells age. Flotillins are thought to be important factors in membrane fluidity. The chain is Flotillin-like protein FloA from Opitutus terrae (strain DSM 11246 / JCM 15787 / PB90-1).